A 427-amino-acid chain; its full sequence is Anhydro-N-acetylmuramic acid kinase (427 aa).

G32–D39 serves as a coordination point for ATP.

The protein belongs to the anhydro-N-acetylmuramic acid kinase family.

The catalysed reaction is 1,6-anhydro-N-acetyl-beta-muramate + ATP + H2O = N-acetyl-D-muramate 6-phosphate + ADP + H(+). The protein operates within amino-sugar metabolism; 1,6-anhydro-N-acetylmuramate degradation. It functions in the pathway cell wall biogenesis; peptidoglycan recycling. Functionally, catalyzes the specific phosphorylation of 1,6-anhydro-N-acetylmuramic acid (anhMurNAc) with the simultaneous cleavage of the 1,6-anhydro ring, generating MurNAc-6-P. Is required for the utilization of anhMurNAc either imported from the medium or derived from its own cell wall murein, and thus plays a role in cell wall recycling. The protein is Anhydro-N-acetylmuramic acid kinase of Psychrobacter cryohalolentis (strain ATCC BAA-1226 / DSM 17306 / VKM B-2378 / K5).